The chain runs to 660 residues: ATPase WRNIP1 (660 aa).

The UBZ4-type zinc finger occupies 17–44; it reads QVQCPVCQQMMPAAHINSHLDRCLLLHP. The Zn(2+) site is built by Cys20, Cys23, His31, His35, and Cys39. The segment at 50–191 is disordered; that stretch reads PAAGPHRAGE…DDPGHWDADA (142 aa). Residues Ser65 and Ser75 each carry the phosphoserine modification. Positions 76-89 are enriched in polar residues; the sequence is ESSALKQPATPTAA. Residue Lys81 forms a Glycyl lysine isopeptide (Lys-Gly) (interchain with G-Cter in ubiquitin) linkage. Residue Thr85 is modified to Phosphothreonine. Phosphoserine occurs at positions 91 and 92. Acidic residues predominate over residues 92–104; that stretch reads SEGEGEEGDDGGE. The residue at position 116 (Thr116) is a Phosphothreonine. Positions 135–155 are enriched in low complexity; the sequence is ARKGLGKRPAAAAAAGSASPR. Lys141 participates in a covalent cross-link: Glycyl lysine isopeptide (Lys-Gly) (interchain with G-Cter in ubiquitin). Ser153 bears the Phosphoserine mark. Residues 159–182 show a composition bias toward acidic residues; it reads ETEAQEEEEAGVDGDGDADVDGED. Lys220 is covalently cross-linked (Glycyl lysine isopeptide (Lys-Gly) (interchain with G-Cter in ubiquitin)). ATP is bound at residue 265–271; sequence PGCGKTT. Residues Lys296, Lys305, Lys311, Lys317, and Lys330 each participate in a glycyl lysine isopeptide (Lys-Gly) (interchain with G-Cter in ubiquitin) cross-link. Lys477 is covalently cross-linked (Glycyl lysine isopeptide (Lys-Gly) (interchain with G-Cter in SUMO2); alternate). A Glycyl lysine isopeptide (Lys-Gly) (interchain with G-Cter in ubiquitin); alternate cross-link involves residue Lys477. Phosphotyrosine is present on residues Tyr529 and Tyr557. Residue Lys622 forms a Glycyl lysine isopeptide (Lys-Gly) (interchain with G-Cter in ubiquitin) linkage. Residue Lys628 forms a Glycyl lysine isopeptide (Lys-Gly) (interchain with G-Cter in ubiquitin); alternate linkage. An N6-acetyllysine; alternate modification is found at Lys628. Lys631 participates in a covalent cross-link: Glycyl lysine isopeptide (Lys-Gly) (interchain with G-Cter in ubiquitin).

This sequence belongs to the AAA ATPase family. RarA/MGS1/WRNIP1 subfamily. Forms homooligomers, possibly octamers. Directly interacts with POLD1, POLD2 and POLD4. Interacts with the N-terminal domain of WRN. Interacts (via UBZ4-type zinc finger) with monoubiquitin and polyubiquitin. Interacts with TRIM14 and PPP6C; these interactions positively regulate the RIGI signaling pathway. In terms of processing, sumoylated with SUMO1 and SUMO2/3. Ubiquitously expressed.

It is found in the nucleus. It localises to the cytoplasm. It catalyses the reaction ATP + H2O = ADP + phosphate + H(+). Functions as a modulator of initiation or reinitiation events during DNA polymerase delta-mediated DNA synthesis. In the presence of ATP, stimulation of DNA polymerase delta-mediated DNA synthesis is decreased. Also plays a role in the innate immune defense against viruses. Stabilizes the RIGI dsRNA interaction and promotes RIGI 'Lys-63'-linked polyubiquitination. In turn, RIGI transmits the signal through mitochondrial MAVS. The chain is ATPase WRNIP1 from Rattus norvegicus (Rat).